The following is a 510-amino-acid chain: Flagellin A (510 aa).

Belongs to the bacterial flagellin family. As to quaternary structure, heteromer of FlaA and FlaB. FlaB is located proximal to the hook while the remainder of the filament is composed of the predominant FlaA.

Its subcellular location is the secreted. It localises to the bacterial flagellum. Flagellin is the subunit protein which polymerizes to form the filaments of bacterial flagella. Important for motility and virulence. The sequence is that of Flagellin A (flaA) from Helicobacter pylori (strain ATCC 700392 / 26695) (Campylobacter pylori).